The primary structure comprises 487 residues: 3-octaprenyl-4-hydroxybenzoate carboxy-lyase (487 aa).

Asn-172 contacts Mn(2+). Prenylated FMN contacts are provided by residues 175 to 177 (IYR), 189 to 191 (RWL), and 194 to 195 (RG). Residue Glu-238 coordinates Mn(2+). The active-site Proton donor is Asp-287.

The protein belongs to the UbiD family. As to quaternary structure, homohexamer. Prenylated FMN serves as cofactor. Mn(2+) is required as a cofactor.

Its subcellular location is the cell membrane. It catalyses the reaction a 4-hydroxy-3-(all-trans-polyprenyl)benzoate + H(+) = a 2-(all-trans-polyprenyl)phenol + CO2. The protein operates within cofactor biosynthesis; ubiquinone biosynthesis. Functionally, catalyzes the decarboxylation of 3-octaprenyl-4-hydroxy benzoate to 2-octaprenylphenol, an intermediate step in ubiquinone biosynthesis. In Dechloromonas aromatica (strain RCB), this protein is 3-octaprenyl-4-hydroxybenzoate carboxy-lyase.